Consider the following 153-residue polypeptide: Aspartate carbamoyltransferase regulatory chain (153 aa).

The Zn(2+) site is built by Cys109, Cys114, Cys138, and Cys141.

Belongs to the PyrI family. In terms of assembly, contains catalytic and regulatory chains. Requires Zn(2+) as cofactor.

Its function is as follows. Involved in allosteric regulation of aspartate carbamoyltransferase. The sequence is that of Aspartate carbamoyltransferase regulatory chain from Salmonella schwarzengrund (strain CVM19633).